A 281-amino-acid chain; its full sequence is Undecaprenyl-diphosphatase (281 aa).

A run of 7 helical transmembrane segments spans residues 49–69 (SANTFKIVIQLGSIFAAAWIF), 92–112 (LHIFIGLIPAGIMGLLFDDFI), 116–136 (LFSVPTVLIGLALGALLMIAA), 152–172 (MTYKQALIIGVAQCLALWPGF), 196–216 (TFIMAVPIMFAASAKSLASNI), 224–244 (ILFYIVGFIAAFIFGVLSIRL), and 257–277 (FAIYRLILVAVIAVLYFGFGI).

This sequence belongs to the UppP family.

Its subcellular location is the cell membrane. It catalyses the reaction di-trans,octa-cis-undecaprenyl diphosphate + H2O = di-trans,octa-cis-undecaprenyl phosphate + phosphate + H(+). Catalyzes the dephosphorylation of undecaprenyl diphosphate (UPP). Confers resistance to bacitracin. The sequence is that of Undecaprenyl-diphosphatase from Macrococcus caseolyticus (strain JCSC5402) (Macrococcoides caseolyticum).